Consider the following 89-residue polypeptide: UPF0237 protein CA_C0478 (89 aa).

Positions 4–78 constitute an ACT domain; it reads IITVIGKDKV…KKLGVSIKIQ (75 aa).

This sequence belongs to the UPF0237 family.

This Clostridium acetobutylicum (strain ATCC 824 / DSM 792 / JCM 1419 / IAM 19013 / LMG 5710 / NBRC 13948 / NRRL B-527 / VKM B-1787 / 2291 / W) protein is UPF0237 protein CA_C0478.